A 265-amino-acid polypeptide reads, in one-letter code: Putative hydro-lyase PA2116 (265 aa).

It belongs to the D-glutamate cyclase family.

The protein is Putative hydro-lyase PA2116 of Pseudomonas aeruginosa (strain ATCC 15692 / DSM 22644 / CIP 104116 / JCM 14847 / LMG 12228 / 1C / PRS 101 / PAO1).